The sequence spans 144 residues: Large ribosomal subunit protein uL11 (144 aa).

The protein belongs to the universal ribosomal protein uL11 family. Part of the ribosomal stalk of the 50S ribosomal subunit. Interacts with L10 and the large rRNA to form the base of the stalk. L10 forms an elongated spine to which L12 dimers bind in a sequential fashion forming a multimeric L10(L12)X complex. One or more lysine residues are methylated.

In terms of biological role, forms part of the ribosomal stalk which helps the ribosome interact with GTP-bound translation factors. This Neisseria gonorrhoeae (strain ATCC 700825 / FA 1090) protein is Large ribosomal subunit protein uL11.